Consider the following 183-residue polypeptide: UPF0114 protein HI_0507 (183 aa).

A run of 3 helical transmembrane segments spans residues 30–50 (LQVP…YKFI), 68–88 (IMLG…LVMV), and 150–170 (TMMW…ALAY).

Belongs to the UPF0114 family.

It localises to the cell membrane. This Haemophilus influenzae (strain ATCC 51907 / DSM 11121 / KW20 / Rd) protein is UPF0114 protein HI_0507.